The following is a 301-amino-acid chain: D-alanine--D-alanine ligase (301 aa).

The region spanning 102–295 is the ATP-grasp domain; it reads KAVFAAAGLP…FPALCAWMVE (194 aa). 128–181 contacts ATP; sequence PLPRPYVIKPVNEGSSVGVFILREGDNRRADIARAWRHGSVAMTEEYVPGRELT. Residues Asp248, Glu262, and Asn264 each coordinate Mg(2+).

It belongs to the D-alanine--D-alanine ligase family. It depends on Mg(2+) as a cofactor. Mn(2+) is required as a cofactor.

The protein localises to the cytoplasm. It carries out the reaction 2 D-alanine + ATP = D-alanyl-D-alanine + ADP + phosphate + H(+). The protein operates within cell wall biogenesis; peptidoglycan biosynthesis. Cell wall formation. This Acidiphilium cryptum (strain JF-5) protein is D-alanine--D-alanine ligase.